The sequence spans 119 residues: Ribonuclease P protein component (119 aa).

The protein belongs to the RnpA family. In terms of assembly, consists of a catalytic RNA component (M1 or rnpB) and a protein subunit.

The enzyme catalyses Endonucleolytic cleavage of RNA, removing 5'-extranucleotides from tRNA precursor.. In terms of biological role, RNaseP catalyzes the removal of the 5'-leader sequence from pre-tRNA to produce the mature 5'-terminus. It can also cleave other RNA substrates such as 4.5S RNA. The protein component plays an auxiliary but essential role in vivo by binding to the 5'-leader sequence and broadening the substrate specificity of the ribozyme. This chain is Ribonuclease P protein component, found in Sodalis glossinidius (strain morsitans).